A 103-amino-acid chain; its full sequence is Co-chaperonin GroES (103 aa).

This sequence belongs to the GroES chaperonin family. In terms of assembly, heptamer of 7 subunits arranged in a ring. Interacts with the chaperonin GroEL.

The protein localises to the cytoplasm. Its function is as follows. Together with the chaperonin GroEL, plays an essential role in assisting protein folding. The GroEL-GroES system forms a nano-cage that allows encapsulation of the non-native substrate proteins and provides a physical environment optimized to promote and accelerate protein folding. GroES binds to the apical surface of the GroEL ring, thereby capping the opening of the GroEL channel. In Gloeothece citriformis (strain PCC 7424) (Cyanothece sp. (strain PCC 7424)), this protein is Co-chaperonin GroES.